Here is a 180-residue protein sequence, read N- to C-terminus: Inner membrane-spanning protein YciB (180 aa).

The next 6 membrane-spanning stretches (helical) occupy residues 4–24 (LLSEIGPVVAFFAGFFYGGGI), 25–45 (QSATLYMLITSVICITLCYII), 52–72 (LSIISTAVLLVSGIITLISGD), 76–96 (IKIKPTILYVIFGIIFLTSGI), 118–138 (ITLSYRTATFFFFMAIVNEIV), and 150–170 (FKVFGVVPITFVFILLQLPLL).

The protein belongs to the YciB family.

The protein resides in the cell inner membrane. In terms of biological role, plays a role in cell envelope biogenesis, maintenance of cell envelope integrity and membrane homeostasis. The sequence is that of Inner membrane-spanning protein YciB from Rickettsia bellii (strain RML369-C).